The following is a 329-amino-acid chain: Catabolite control protein A (329 aa).

Residues 1–57 (MTVTIYDVAREARVSMATVSRVVNGNQNVKAETKNKVNEVIKRLNYRPNAVARGLAS) form the HTH lacI-type domain. Residues 5-24 (IYDVAREARVSMATVSRVVN) constitute a DNA-binding region (H-T-H motif).

Its function is as follows. Global transcriptional regulator of carbon catabolite repression (CCR) and carbon catabolite activation (CCA), which ensures optimal energy usage under diverse conditions. This chain is Catabolite control protein A (ccpA), found in Staphylococcus aureus (strain COL).